The following is a 519-amino-acid chain: Serine/threonine-protein kinase RIO1 (519 aa).

Pro residues predominate over residues Met-1–Pro-10. Residues Met-1–Asp-54 are disordered. Residues Gln-21–Asp-36 are compositionally biased toward acidic residues. Positions Gly-39–Ala-53 are enriched in low complexity. A Protein kinase domain is found at Ser-122–Lys-519. ATP-binding residues include Lys-154 and Leu-228. The Proton acceptor role is filled by Asp-281. Residues Asn-286 and Asp-298 each coordinate Mg(2+). Residue Asp-298 is the 4-aspartylphosphate intermediate of the active site. The interval Ala-418–Lys-519 is disordered. Over residues Gly-439–Glu-464 the composition is skewed to acidic residues. Residues Ser-440 to Lys-519 are association with (pre-)40S ribosomal particle. Basic residues-rich tracts occupy residues Lys-470 to Met-489 and Glu-497 to Lys-519.

It belongs to the protein kinase superfamily. RIO-type Ser/Thr kinase family. The cofactor is Mg(2+). Autophosphorylated.

It localises to the cytoplasm. The catalysed reaction is L-seryl-[protein] + ATP = O-phospho-L-seryl-[protein] + ADP + H(+). The enzyme catalyses L-threonyl-[protein] + ATP = O-phospho-L-threonyl-[protein] + ADP + H(+). It carries out the reaction ATP + H2O = ADP + phosphate + H(+). Its function is as follows. Involved in the final steps of cytoplasmic maturation of the 40S ribosomal subunit. In vitro, has strong ATPase activity and only low protein kinase activity. This Chaetomium thermophilum (strain DSM 1495 / CBS 144.50 / IMI 039719) (Thermochaetoides thermophila) protein is Serine/threonine-protein kinase RIO1.